The chain runs to 79 residues: Cyclin-dependent kinases regulatory subunit 1 (79 aa).

N-acetylserine is present on Ser2.

The protein belongs to the CKS family. As to quaternary structure, forms a homohexamer that can probably bind six kinase subunits.

Binds to the catalytic subunit of the cyclin dependent kinases and is essential for their biological function. The protein is Cyclin-dependent kinases regulatory subunit 1 (CKS1B) of Bos taurus (Bovine).